The following is a 314-amino-acid chain: Putative S-adenosyl-L-methionine-dependent methyltransferase MAB_3886c (314 aa).

S-adenosyl-L-methionine contacts are provided by residues D133 and D162 to L163.

The protein belongs to the UPF0677 family.

Exhibits S-adenosyl-L-methionine-dependent methyltransferase activity. This Mycobacteroides abscessus (strain ATCC 19977 / DSM 44196 / CCUG 20993 / CIP 104536 / JCM 13569 / NCTC 13031 / TMC 1543 / L948) (Mycobacterium abscessus) protein is Putative S-adenosyl-L-methionine-dependent methyltransferase MAB_3886c.